The chain runs to 125 residues: Large ribosomal subunit protein bL20 (125 aa).

The protein belongs to the bacterial ribosomal protein bL20 family.

Binds directly to 23S ribosomal RNA and is necessary for the in vitro assembly process of the 50S ribosomal subunit. It is not involved in the protein synthesizing functions of that subunit. This chain is Large ribosomal subunit protein bL20, found in Thermobifida fusca (strain YX).